The chain runs to 149 residues: Large-conductance mechanosensitive channel (149 aa).

Helical transmembrane passes span 16–36 (VMDLAVGVIIGGAFSTIVNSV), 40–60 (LIMPVVGVATGGLDFSNKFIL), and 89–109 (GSFITVAINFVILALIIFMMV).

The protein belongs to the MscL family. As to quaternary structure, homopentamer.

It localises to the cell inner membrane. Its function is as follows. Channel that opens in response to stretch forces in the membrane lipid bilayer. May participate in the regulation of osmotic pressure changes within the cell. This Paraburkholderia phymatum (strain DSM 17167 / CIP 108236 / LMG 21445 / STM815) (Burkholderia phymatum) protein is Large-conductance mechanosensitive channel.